We begin with the raw amino-acid sequence, 24 residues long: Brevinin-1Pa (24 aa).

The cysteines at positions 18 and 24 are disulfide-linked.

Expressed by the skin glands.

It localises to the secreted. Antibacterial activity against Gram-positive bacterium S.aureus and Gram-negative bacterium E.coli. Has activity against C.albicans. The sequence is that of Brevinin-1Pa from Lithobates pipiens (Northern leopard frog).